We begin with the raw amino-acid sequence, 246 residues long: Ribosomal RNA large subunit methyltransferase E (246 aa).

5 residues coordinate S-adenosyl-L-methionine: Gly81, Trp83, Asp104, Asp120, and Asp144. Catalysis depends on Lys184, which acts as the Proton acceptor.

Belongs to the class I-like SAM-binding methyltransferase superfamily. RNA methyltransferase RlmE family.

The protein localises to the cytoplasm. It catalyses the reaction uridine(2552) in 23S rRNA + S-adenosyl-L-methionine = 2'-O-methyluridine(2552) in 23S rRNA + S-adenosyl-L-homocysteine + H(+). In terms of biological role, specifically methylates the uridine in position 2552 of 23S rRNA at the 2'-O position of the ribose in the fully assembled 50S ribosomal subunit. The sequence is that of Ribosomal RNA large subunit methyltransferase E from Agrobacterium fabrum (strain C58 / ATCC 33970) (Agrobacterium tumefaciens (strain C58)).